The chain runs to 461 residues: Steroidogenic factor 1 (461 aa).

The segment at residues 10 to 85 is a DNA-binding region (nuclear receptor); that stretch reads DELCPVCGDK…VGMRLEAVRA (76 aa). Residues 13–33 form an NR C4-type zinc finger; sequence CPVCGDKVSGYHYGLLTCESC. An N6-acetyllysine mark is found at lysine 34, lysine 38, and lysine 72. The NR C4-type zinc finger occupies 49 to 73; it reads CTESQSCKIDKTLRKRCPFCRFQKC. Lysine 119 is covalently cross-linked (Glycyl lysine isopeptide (Lys-Gly) (interchain with G-Cter in SUMO)). Positions 119–153 are disordered; sequence KLETGPPMGVPPPPPPPPDYMLPPGLHVPEPKGLA. Residues 126 to 139 are compositionally biased toward pro residues; the sequence is MGVPPPPPPPPDYM. A Glycyl lysine isopeptide (Lys-Gly) (interchain with G-Cter in SUMO) cross-link involves residue lysine 194. Position 203 is a phosphoserine; by CDK7 (serine 203). The NR LBD domain maps to 222–459; it reads GVPELILQLL…NLLIEMLQAK (238 aa). Glycine 341, tyrosine 436, and lysine 440 together coordinate a 1,2-diacyl-sn-glycero-3-phosphocholine.

Belongs to the nuclear hormone receptor family. NR5 subfamily. In terms of assembly, binds DNA as a monomer. Part of a complex consisting of SFPQ, NONO and NR5A1. Interacts with NR0B2. Interacts with DGKQ and CDK7. Binds to and activated by HIPK3. Post-translationally, acetylation stimulates the transcriptional activity. In terms of processing, sumoylation reduces CDK7-mediated phosphorylation on Ser-203. Phosphorylated on Ser-203 by CDK7. This phosphorylation promotes transcriptional activity.

Its subcellular location is the nucleus. Transcriptional activator. Seems to be essential for sexual differentiation and formation of the primary steroidogenic tissues. Binds to the Ad4 site found in the promoter region of steroidogenic P450 genes such as CYP11A, CYP11B and CYP21B. Also regulates the AMH/Muellerian inhibiting substance gene as well as the AHCH and STAR genes. 5'-YCAAGGYC-3' and 5'-RRAGGTCA-3' are the consensus sequences for the recognition by NR5A1. The SFPQ-NONO-NR5A1 complex binds to the CYP17 promoter and regulates basal and cAMP-dependent transcriptional activity. Binds phospholipids with a phosphatidylinositol (PI) headgroup, in particular PI(3,4)P2 and PI(3,4,5)P3. Activated by the phosphorylation of NR5A1 by HIPK3 leading to increased steroidogenic gene expression upon cAMP signaling pathway stimulation. In Equus caballus (Horse), this protein is Steroidogenic factor 1 (NR5A1).